The chain runs to 281 residues: Proteasome subunit beta 2 (281 aa).

A propeptide spans 1–53 (MEANTRSTGRLPAAFLTPGSSSFMDFLSEHQPEILPGNRQLPPTQGVIEAPHG) (removed in mature form; by autocatalysis). The active-site Nucleophile is the threonine 54.

Belongs to the peptidase T1B family. In terms of assembly, the 20S proteasome core is composed of 14 alpha and 14 beta subunits that assemble into four stacked heptameric rings, resulting in a barrel-shaped structure. The two inner rings, each composed of seven catalytic beta subunits, are sandwiched by two outer rings, each composed of seven alpha subunits. The catalytic chamber with the active sites is on the inside of the barrel. Has a gated structure, the ends of the cylinder being occluded by the N-termini of the alpha-subunits. Is capped by the proteasome-associated ATPase, ARC.

Its subcellular location is the cytoplasm. It catalyses the reaction Cleavage of peptide bonds with very broad specificity.. The protein operates within protein degradation; proteasomal Pup-dependent pathway. With respect to regulation, the formation of the proteasomal ATPase ARC-20S proteasome complex, likely via the docking of the C-termini of ARC into the intersubunit pockets in the alpha-rings, may trigger opening of the gate for substrate entry. Interconversion between the open-gate and close-gate conformations leads to a dynamic regulation of the 20S proteasome proteolysis activity. Its function is as follows. Component of the proteasome core, a large protease complex with broad specificity involved in protein degradation. This chain is Proteasome subunit beta 2, found in Streptomyces avermitilis (strain ATCC 31267 / DSM 46492 / JCM 5070 / NBRC 14893 / NCIMB 12804 / NRRL 8165 / MA-4680).